A 119-amino-acid polypeptide reads, in one-letter code: Ribonuclease P protein component (119 aa).

This sequence belongs to the RnpA family. In terms of assembly, consists of a catalytic RNA component (M1 or rnpB) and a protein subunit.

It catalyses the reaction Endonucleolytic cleavage of RNA, removing 5'-extranucleotides from tRNA precursor.. Its function is as follows. RNaseP catalyzes the removal of the 5'-leader sequence from pre-tRNA to produce the mature 5'-terminus. It can also cleave other RNA substrates such as 4.5S RNA. The protein component plays an auxiliary but essential role in vivo by binding to the 5'-leader sequence and broadening the substrate specificity of the ribozyme. The polypeptide is Ribonuclease P protein component (Clostridium acetobutylicum (strain ATCC 824 / DSM 792 / JCM 1419 / IAM 19013 / LMG 5710 / NBRC 13948 / NRRL B-527 / VKM B-1787 / 2291 / W)).